The primary structure comprises 189 residues: Protein C1orf43 homolog (189 aa).

The helical transmembrane segment at 11–31 threads the bilayer; it reads VNVVLVMAYGSLVFVLLFIFV.

It localises to the membrane. It is found in the golgi apparatus. Its subcellular location is the mitochondrion. Its function is as follows. General regulator of phagocytosis. Required to uptake Gram negative bacterium by macrophages. The chain is Protein C1orf43 homolog from Pongo abelii (Sumatran orangutan).